The chain runs to 320 residues: Zona pellucida-binding protein 1 (320 aa).

N-linked (GlcNAc...) asparagine glycans are attached at residues Asn-85 and Asn-158.

This sequence belongs to the zona pellucida-binding protein Sp38 family.

Its subcellular location is the cytoplasmic vesicle. The protein resides in the secretory vesicle. The protein localises to the acrosome. It is found in the secreted. It localises to the acrosome membrane. In terms of biological role, plays a role in sperm morphogenesis and in sperm-oocyte interaction during fertilization. The chain is Zona pellucida-binding protein 1 (ZPBP1) from Gallus gallus (Chicken).